The primary structure comprises 629 residues: Nicotinic receptor-associated protein 1 (629 aa).

C2 domains follow at residues Met1 to Leu144 and Arg162 to Leu299. 10 residues coordinate Ca(2+): Asp33, Asp39, Asp108, Asp110, Asp122, Asp192, Asp198, Asp254, Asp256, and Asp274. The VWFA domain maps to Glu342–Leu561. 2 disordered regions span residues Gly581 to Tyr600 and Ile607 to Tyr629.

Belongs to the copine family. Interacts with nicotinic acetylcholine receptor. Ca(2+) serves as cofactor.

It is found in the cell membrane. In terms of biological role, exhibits calcium-dependent phospholipid binding properties. May function in membrane trafficking. Regulates synaptic levels of nicotinic acetylcholine receptor subunit lev-1 and unc-38 in the nerve cord. Involved in nicotinic acetylcholine receptor (nAChR)-mediated sensitivity to nicotine and levamisole. Affects directional sperm motility. The protein is Nicotinic receptor-associated protein 1 of Caenorhabditis briggsae.